A 144-amino-acid polypeptide reads, in one-letter code: Ribosome association toxin RatA (144 aa).

It belongs to the ribosome association toxin RatA family.

Its function is as follows. Toxic component of a type II toxin-antitoxin (TA) system. Binds to 50S ribosomal subunits, preventing them from associating with 30S subunits to form 70S ribosomes. Its antitoxin is unknown. The protein is Ribosome association toxin RatA (ratA) of Pseudomonas aeruginosa (strain ATCC 15692 / DSM 22644 / CIP 104116 / JCM 14847 / LMG 12228 / 1C / PRS 101 / PAO1).